Here is a 1011-residue protein sequence, read N- to C-terminus: Multiple C2 domain and transmembrane region protein 7 (1011 aa).

Residues 1-110 form the C2 1 domain; the sequence is MMMSNLKLGV…PHSDAVVLHF (110 aa). Over residues 178 to 195 the composition is skewed to polar residues; sequence QEHQHQHPQGPNQSSSLA. The interval 178-201 is disordered; that stretch reads QEHQHQHPQGPNQSSSLAAEQDNH. 3 consecutive C2 domains span residues 261–381, 421–546, and 587–709; these read IHKD…PQWY, VDCS…ARWY, and YSSD…THSY. The Ca(2+) site is built by D294, D300, D347, D349, and D354. 3 helical membrane passes run 812–832, 846–866, and 954–974; these read MMTVFSGVIAVGKWFSDICSW, LMLVCLPELILPTMFLYMFLI, and IFVILCFIAAIVFFITPIQIV.

It belongs to the MCTP family. Ca(2+) is required as a cofactor. In terms of tissue distribution, accumulates specifically in hydathodes. Restricted the basal meristem of roots. Observed in flowers.

It is found in the membrane. The protein resides in the vesicle. Its subcellular location is the endosome membrane. In terms of biological role, may function as a signaling molecule by regulating the trafficking of other regulators. This Arabidopsis thaliana (Mouse-ear cress) protein is Multiple C2 domain and transmembrane region protein 7.